The primary structure comprises 551 residues: Cilia- and flagella-associated protein 45 (551 aa).

Disordered stretches follow at residues 1–30 (MPLSTAGILSSSSAASNRSRNKARYRTKAV) and 461–489 (RLEEEKKATGRLQHANELRRQVRENQQKE). Positions 157-526 (NNNKKLSDLE…IKRKKLEELR (370 aa)) form a coiled coil.

Belongs to the CFAP45 family. Microtubule inner protein component of sperm flagellar doublet microtubules. Interacts with AK8; dimerization with AK8 may create a cavity at the interface of the dimer that can accommodate AMP. Interacts with CFAP52. Interacts with ENKUR. Directly interacts with DNALI1. Interacts with DNAH11. Interacts with DNAI1. As to expression, expressed in respiratory cells and in sperm (at protein level). Expressed in nasopharyngeal epithelium and trachea.

It localises to the cytoplasm. The protein localises to the cytoskeleton. It is found in the cilium axoneme. Its subcellular location is the flagellum axoneme. The protein resides in the cell projection. It localises to the cilium. The protein localises to the flagellum. In terms of biological role, microtubule inner protein (MIP) part of the dynein-decorated doublet microtubules (DMTs) in cilia axoneme, which is required for motile cilia beating. It is an AMP-binding protein that may facilitate dynein ATPase-dependent ciliary and flagellar beating via adenine nucleotide homeostasis. May function as a donor of AMP to AK8 and hence promote ADP production. The sequence is that of Cilia- and flagella-associated protein 45 from Homo sapiens (Human).